A 414-amino-acid chain; its full sequence is ATP-dependent Clp protease ATP-binding subunit ClpX (414 aa).

The ClpX-type ZB domain occupies M1–R51. Residues C10, C13, C32, and C35 each contribute to the Zn(2+) site. Residue S120–L127 participates in ATP binding.

It belongs to the ClpX chaperone family. As to quaternary structure, component of the ClpX-ClpP complex. Forms a hexameric ring that, in the presence of ATP, binds to fourteen ClpP subunits assembled into a disk-like structure with a central cavity, resembling the structure of eukaryotic proteasomes.

In terms of biological role, ATP-dependent specificity component of the Clp protease. It directs the protease to specific substrates. Can perform chaperone functions in the absence of ClpP. This chain is ATP-dependent Clp protease ATP-binding subunit ClpX, found in Bacteroides thetaiotaomicron (strain ATCC 29148 / DSM 2079 / JCM 5827 / CCUG 10774 / NCTC 10582 / VPI-5482 / E50).